The following is a 380-amino-acid chain: uncharacterized protein (380 aa).

HTH tetR-type domains are found at residues 3-63 (ESAE…KEGL) and 201-262 (VRTR…CAEI). The H-T-H motif DNA-binding region spans 225–244 (TISDITRKSNIRRATFYDHY).

This is an uncharacterized protein from Bacillus subtilis (strain 168).